A 303-amino-acid polypeptide reads, in one-letter code: Crk-like protein (303 aa).

The 89-residue stretch at Trp14 to Ala102 folds into the SH2 domain. The region spanning Glu123 to Arg183 is the SH3 1 domain. Tyr127 carries the phosphotyrosine modification. The segment at Ser184–Ala204 is disordered. Tyr207 carries the post-translational modification Phosphotyrosine. One can recognise an SH3 2 domain in the interval Asn235 to Pro296.

Belongs to the CRK family. As to quaternary structure, interacts with INPP5D/SHIP1. Interacts with DOCK2 and EPOR. Interacts with phosphorylated CBLB and IRS4. Interacts with BCAR1/CAS and NEDD9/HEF1.

In terms of biological role, may mediate the transduction of intracellular signals. The protein is Crk-like protein of Rattus norvegicus (Rat).